Consider the following 1374-residue polypeptide: Sterol 3-beta-glucosyltransferase (1374 aa).

Basic and acidic residues predominate over residues 1–14; that stretch reads MRPLRDDAKRRADR. 3 disordered regions span residues 1–60, 83–190, and 206–227; these read MRPL…RDGN, ARFD…PRAA, and TSAT…QPQS. The segment covering 16–28 has biased composition (polar residues); sequence LSASMKPTSSNRP. A compositionally biased stretch (basic and acidic residues) spans 29–41; it reads FSDRVPDRFKDGD. Over residues 101 to 112 the composition is skewed to polar residues; sequence VEQTTGKASSRT. Over residues 125–138 the composition is skewed to basic and acidic residues; the sequence is KRSEPSKLVLEERG. Residues 234–283 enclose the GRAM 1 domain; it reads MRLMKMFEFAKPEKVLVEYACSLLQSMLLQGYMYVTEGHICFYAYLPKKS. The PH domain maps to 285 to 382; sequence VAIKSGYLSK…WVKALQQVIF (98 aa). A disordered region spans residues 458-538; it reads ATKEAQDQHD…SMTDTTESAS (81 aa). Basic and acidic residues-rich tracts occupy residues 461-473 and 490-499; these read EAQD…HQPE and SDQRREDSPR. A compositionally biased stretch (polar residues) spans 503-538; sequence SSVGNENQGSADSFAEQGTGSSPIIQSMTDTTESAS. Residues 704 to 770 form the GRAM 2 domain; it reads DRFRAHFALP…KDIENVEKEK (67 aa). UDP-alpha-D-glucose is bound by residues Ser893, Arg894, Asp896, Ala1196, His1198, His1211, Gly1215, Thr1216, Asp1235, and Gln1236. Polar residues predominate over residues 1314–1325; that stretch reads ASSTPFSPTPTA. The disordered stretch occupies residues 1314–1338; sequence ASSTPFSPTPTAKASPDGGDDDLDD.

The protein belongs to the glycosyltransferase 28 family.

It localises to the cytoplasm. Its subcellular location is the preautophagosomal structure membrane. The catalysed reaction is a sterol + UDP-alpha-D-glucose = a sterol 3-beta-D-glucoside + UDP + H(+). The enzyme catalyses ergosterol + UDP-alpha-D-glucose = ergosteryl 3-beta-D-glucoside + UDP + H(+). Functionally, sterol glycosyltransferase responsible for the glycosylation of ergosterol to form ergosterol-glucoside. This chain is Sterol 3-beta-glucosyltransferase, found in Penicillium rubens (strain ATCC 28089 / DSM 1075 / NRRL 1951 / Wisconsin 54-1255) (Penicillium chrysogenum).